The primary structure comprises 89 residues: Small ribosomal subunit protein uS15 (89 aa).

It belongs to the universal ribosomal protein uS15 family. Part of the 30S ribosomal subunit. Forms a bridge to the 50S subunit in the 70S ribosome, contacting the 23S rRNA.

In terms of biological role, one of the primary rRNA binding proteins, it binds directly to 16S rRNA where it helps nucleate assembly of the platform of the 30S subunit by binding and bridging several RNA helices of the 16S rRNA. Functionally, forms an intersubunit bridge (bridge B4) with the 23S rRNA of the 50S subunit in the ribosome. This is Small ribosomal subunit protein uS15 from Gloeobacter violaceus (strain ATCC 29082 / PCC 7421).